The chain runs to 37 residues: Large ribosomal subunit protein bL36c (37 aa).

This sequence belongs to the bacterial ribosomal protein bL36 family.

It is found in the plastid. The protein resides in the chloroplast. In Huperzia lucidula (Shining clubmoss), this protein is Large ribosomal subunit protein bL36c.